We begin with the raw amino-acid sequence, 166 residues long: Glutamyl-tRNA(Gln) amidotransferase subunit C-2, mitochondrial (166 aa).

The protein belongs to the GatC family. As to quaternary structure, subunit of the heterotrimeric GatCAB amidotransferase (AdT) complex, composed of A, B and C subunits.

The protein resides in the mitochondrion. The catalysed reaction is L-glutamyl-tRNA(Gln) + L-glutamine + ATP + H2O = L-glutaminyl-tRNA(Gln) + L-glutamate + ADP + phosphate + H(+). Its function is as follows. Allows the formation of correctly charged Gln-tRNA(Gln) through the transamidation of misacylated Glu-tRNA(Gln) in the mitochondria. The reaction takes place in the presence of glutamine and ATP through an activated gamma-phospho-Glu-tRNA(Gln). This is Glutamyl-tRNA(Gln) amidotransferase subunit C-2, mitochondrial from Culex quinquefasciatus (Southern house mosquito).